A 478-amino-acid polypeptide reads, in one-letter code: Kynurenine 3-monooxygenase (478 aa).

Residues V19, 37 to 40 (YEAR), and A57 each bind FAD. 2 residues coordinate L-kynurenine: R85 and Y99. FAD contacts are provided by residues R111, L136, T172, D304, and 317-318 (MN). The L-kynurenine site is built by N363 and Y398. 2 consecutive transmembrane segments (helical) span residues 385–404 (FLHALMPSTFIPLYTMVAFT) and 425–445 (GLFVLGSLVAIGSAYILVHHL).

This sequence belongs to the aromatic-ring hydroxylase family. KMO subfamily. The cofactor is FAD. Highest activity in liver and kidney. Low activity in spleen, stomach, intestinal tract, esophagus, heart and lung.

It is found in the mitochondrion outer membrane. It catalyses the reaction L-kynurenine + NADPH + O2 + H(+) = 3-hydroxy-L-kynurenine + NADP(+) + H2O. Its pathway is cofactor biosynthesis; NAD(+) biosynthesis; quinolinate from L-kynurenine: step 1/3. In terms of biological role, catalyzes the hydroxylation of L-kynurenine (L-Kyn) to form 3-hydroxy-L-kynurenine (L-3OHKyn). Required for synthesis of quinolinic acid, a neurotoxic NMDA receptor antagonist and potential endogenous inhibitor of NMDA receptor signaling in axonal targeting, synaptogenesis and apoptosis during brain development. Quinolinic acid may also affect NMDA receptor signaling in pancreatic beta cells, osteoblasts, myocardial cells, and the gastrointestinal tract. The protein is Kynurenine 3-monooxygenase of Rattus norvegicus (Rat).